Reading from the N-terminus, the 352-residue chain is MSIQTDDFSEQRIIAATPASANEEAIERALRPKQLDEYVGQEKIRGQLEIFITAARQRHEALDHTLLFGPPGLGKTTLAHIIAREMGVNLRQTSGPVLERAGDLAALLTNLEANDVLFIDEIHRLSPVVEEILYPALEDYQIDIMIGEGPAARSVRLDLQPFTLVGATTRAGMLTNPLRDRFGIVARLEFYTPLELTKIVTRSSALLNAPIDEDGAFEIAKRSRGTPRIANRLLRRVRDYAEVKGNGKITKAMADAALVMLDVDPVGFDLMDRKLLEAVLFKFNGGPVGLDNLAAAIGEERDTIEDVLEPYLIQQGFLQRTPRGRIATPVAYAHFGVTAPQTGPNGDLWAGQ.

A large ATPase domain (RuvB-L) region spans residues 5–191; it reads TDDFSEQRII…FGIVARLEFY (187 aa). Residues leucine 30, arginine 31, glycine 72, lysine 75, threonine 76, threonine 77, 138–140, arginine 181, tyrosine 191, and arginine 228 contribute to the ATP site; that span reads EDY. Threonine 76 is a binding site for Mg(2+). The interval 192–262 is small ATPAse domain (RuvB-S); that stretch reads TPLELTKIVT…MADAALVMLD (71 aa). The head domain (RuvB-H) stretch occupies residues 265–352; sequence PVGFDLMDRK…GPNGDLWAGQ (88 aa). The DNA site is built by arginine 301, arginine 320, and arginine 325.

Belongs to the RuvB family. Homohexamer. Forms an RuvA(8)-RuvB(12)-Holliday junction (HJ) complex. HJ DNA is sandwiched between 2 RuvA tetramers; dsDNA enters through RuvA and exits via RuvB. An RuvB hexamer assembles on each DNA strand where it exits the tetramer. Each RuvB hexamer is contacted by two RuvA subunits (via domain III) on 2 adjacent RuvB subunits; this complex drives branch migration. In the full resolvosome a probable DNA-RuvA(4)-RuvB(12)-RuvC(2) complex forms which resolves the HJ.

Its subcellular location is the cytoplasm. It catalyses the reaction ATP + H2O = ADP + phosphate + H(+). Functionally, the RuvA-RuvB-RuvC complex processes Holliday junction (HJ) DNA during genetic recombination and DNA repair, while the RuvA-RuvB complex plays an important role in the rescue of blocked DNA replication forks via replication fork reversal (RFR). RuvA specifically binds to HJ cruciform DNA, conferring on it an open structure. The RuvB hexamer acts as an ATP-dependent pump, pulling dsDNA into and through the RuvAB complex. RuvB forms 2 homohexamers on either side of HJ DNA bound by 1 or 2 RuvA tetramers; 4 subunits per hexamer contact DNA at a time. Coordinated motions by a converter formed by DNA-disengaged RuvB subunits stimulates ATP hydrolysis and nucleotide exchange. Immobilization of the converter enables RuvB to convert the ATP-contained energy into a lever motion, pulling 2 nucleotides of DNA out of the RuvA tetramer per ATP hydrolyzed, thus driving DNA branch migration. The RuvB motors rotate together with the DNA substrate, which together with the progressing nucleotide cycle form the mechanistic basis for DNA recombination by continuous HJ branch migration. Branch migration allows RuvC to scan DNA until it finds its consensus sequence, where it cleaves and resolves cruciform DNA. The protein is Holliday junction branch migration complex subunit RuvB of Janthinobacterium sp. (strain Marseille) (Minibacterium massiliensis).